The chain runs to 393 residues: Pyruvate dehydrogenase E1 component subunit alpha-2, mitochondrial (393 aa).

The transit peptide at 1 to 28 (MALSRLSSRSNTFLKPAITALPSSIRRH) directs the protein to the mitochondrion. Residues His-94, Tyr-120, Arg-121, Gly-169, Val-171, Asp-200, Gly-201, Ala-202, Asn-229, and Tyr-231 each contribute to the pyruvate site. Tyr-120, Arg-121, Gly-169, Val-171, Asp-200, Gly-201, Ala-202, and Asn-229 together coordinate thiamine diphosphate. Asp-200 provides a ligand contact to Mg(2+). Residues Asn-229 and Tyr-231 each coordinate Mg(2+). His-295 is a thiamine diphosphate binding site.

Tetramer of 2 alpha and 2 beta subunits. It depends on thiamine diphosphate as a cofactor. The cofactor is Mg(2+).

It localises to the mitochondrion matrix. It catalyses the reaction N(6)-[(R)-lipoyl]-L-lysyl-[protein] + pyruvate + H(+) = N(6)-[(R)-S(8)-acetyldihydrolipoyl]-L-lysyl-[protein] + CO2. Its activity is regulated as follows. E1 activity is regulated by phosphorylation (inactivation) and dephosphorylation (activation) of the alpha subunit. Its function is as follows. The pyruvate dehydrogenase complex catalyzes the overall conversion of pyruvate to acetyl-CoA and CO(2). It contains multiple copies of three enzymatic components: pyruvate dehydrogenase (E1), dihydrolipoamide acetyltransferase (E2) and lipoamide dehydrogenase (E3). This Arabidopsis thaliana (Mouse-ear cress) protein is Pyruvate dehydrogenase E1 component subunit alpha-2, mitochondrial (IAR4).